The sequence spans 971 residues: Translation initiation factor IF-2 (971 aa).

The span at 49–63 shows a compositional bias: basic and acidic residues; that stretch reads HLRKSHGATDGDKRK. Disordered regions lie at residues 49–85 and 99–386; these read HLRK…KART and RDDV…PTEP. The segment covering 105–114 has biased composition (low complexity); that stretch reads GAEQGQAQVA. The span at 121-181 shows a compositional bias: basic and acidic residues; that stretch reads ELKRREEEAR…EEEAAAKRAA (61 aa). The segment covering 182 to 200 has biased composition (low complexity); it reads AEAAAAQQAAAQQAAAEQE. Over residues 209-260 the composition is skewed to basic and acidic residues; that stretch reads DEARAAAERAAQREAAKKAEDAAREAADKARAEQEEISKRRAAAEAEARAIR. The span at 303-325 shows a compositional bias: low complexity; the sequence is ARPAVKKPAGAAAPATTQAPAGA. Residues 355–368 show a composition bias toward gly residues; it reads SSGGVDRGWRGGPK. A tr-type G domain is found at 471–640; the sequence is PRPPVVTVMG…LLQAEVLELK (170 aa). The G1 stretch occupies residues 480–487; the sequence is GHVDHGKT. Residue 480–487 coordinates GTP; that stretch reads GHVDHGKT. Positions 505 to 509 are G2; it reads GITQH. Positions 526-529 are G3; sequence DTPG. Residues 526 to 530 and 580 to 583 each bind GTP; these read DTPGH and NKID. The interval 580–583 is G4; that stretch reads NKID. The tract at residues 616–618 is G5; the sequence is SAK.

This sequence belongs to the TRAFAC class translation factor GTPase superfamily. Classic translation factor GTPase family. IF-2 subfamily.

It localises to the cytoplasm. Its function is as follows. One of the essential components for the initiation of protein synthesis. Protects formylmethionyl-tRNA from spontaneous hydrolysis and promotes its binding to the 30S ribosomal subunits. Also involved in the hydrolysis of GTP during the formation of the 70S ribosomal complex. The chain is Translation initiation factor IF-2 from Burkholderia cenocepacia (strain ATCC BAA-245 / DSM 16553 / LMG 16656 / NCTC 13227 / J2315 / CF5610) (Burkholderia cepacia (strain J2315)).